The following is a 312-amino-acid chain: Malate dehydrogenase (312 aa).

NAD(+)-binding positions include 7-13 (GAAGGIG) and D34. The substrate site is built by R81 and R87. NAD(+) is bound by residues N94 and 117-119 (ITN). 2 residues coordinate substrate: N119 and R153. The Proton acceptor role is filled by H177. M227 contributes to the NAD(+) binding site.

This sequence belongs to the LDH/MDH superfamily. MDH type 1 family. In terms of assembly, homodimer.

It carries out the reaction (S)-malate + NAD(+) = oxaloacetate + NADH + H(+). Functionally, catalyzes the reversible oxidation of malate to oxaloacetate. This is Malate dehydrogenase from Escherichia fergusonii (strain ATCC 35469 / DSM 13698 / CCUG 18766 / IAM 14443 / JCM 21226 / LMG 7866 / NBRC 102419 / NCTC 12128 / CDC 0568-73).